The sequence spans 258 residues: MILVLDVGNTNIVLGIYKNKELIANWRLATDNKRTADEYGIQVIELFSHNNLSFSDIEGVIISSVVPNIMYSLEHMISKYFNIKPIIVGPGVKTGINIKYDNPKEVGADRIVNAVAAHEIYKKPLIIIDFGTATTFCAVTKEANYLGGTICPGIKISSDALFDKAAKLPRVELVKTPGVICKNTVASIQSGIIYGYAGQVDYIVSKMKKEMMDLGEEEPFVVATGGFAKLISEESKSIDEINAILTLEGLRVIYEKNK.

Residue 6-13 (DVGNTNIV) coordinates ATP. Residues tyrosine 100 and 107 to 110 (GADR) contribute to the substrate site. Aspartate 109 functions as the Proton acceptor in the catalytic mechanism. K(+) is bound at residue aspartate 129. Residue threonine 132 coordinates ATP. A substrate-binding site is contributed by threonine 184.

It belongs to the type III pantothenate kinase family. In terms of assembly, homodimer. NH4(+) serves as cofactor. It depends on K(+) as a cofactor.

Its subcellular location is the cytoplasm. It carries out the reaction (R)-pantothenate + ATP = (R)-4'-phosphopantothenate + ADP + H(+). Its pathway is cofactor biosynthesis; coenzyme A biosynthesis; CoA from (R)-pantothenate: step 1/5. Catalyzes the phosphorylation of pantothenate (Pan), the first step in CoA biosynthesis. The sequence is that of Type III pantothenate kinase from Clostridium botulinum (strain Kyoto / Type A2).